A 710-amino-acid chain; its full sequence is Nucleolin (710 aa).

A disordered region spans residues 1-303 (MVKLAKAGKN…KKQKVEGTEP (303 aa)). Lys9, Lys15, and Lys16 each carry N6-acetyllysine. Residues 24–43 (VEEDSEDEEMSEDEEDDSSG) show a composition bias toward acidic residues. Phosphoserine occurs at positions 28, 34, 41, and 42. Residues 56–107 (AAATSAKKVVVSPTKKVAVATPAKKAAVTPGKKAAATPAKKTVTPAKAVTTP) show a composition bias toward low complexity. Copy 1 of the repeat occupies 58-65 (ATSAKKVV). The segment at 58 to 135 (ATSAKKVVVS…GAAIPAKGAK (78 aa)) is 8 X 8 AA tandem repeats of X-T-P-X-K-K-X-X. At Ser67 the chain carries Phosphoserine. Phosphothreonine is present on residues Thr69, Thr76, Thr84, and Thr92. Repeat copies occupy residues 75–82 (ATPAKKAA), 83–90 (VTPGKKAA), and 91–98 (ATPAKKTV). Residue Lys96 is modified to N6-acetyllysine. Thr99 carries the post-translational modification Phosphothreonine. Residues 99-104 (TPAKAV) form a 5; truncated repeat. Lys102 is subject to N6-acetyllysine. Copy 6 of the repeat occupies 105 to 112 (TTPGKKGA). At Thr106 the chain carries Phosphothreonine. Lys109 bears the N6-acetyllysine mark. A Phosphothreonine modification is found at Thr113. Lys116 carries the post-translational modification N6-acetyllysine. 2 repeat units span residues 120–127 (ATPGKKGA) and 128–135 (AIPAKGAK). Thr121 carries the post-translational modification Phosphothreonine. Positions 122 to 137 (PGKKGAAIPAKGAKNG) are enriched in low complexity. Position 124 is an N6-acetyllysine (Lys124). Residues Ser145 and Ser153 each carry the phosphoserine modification. Residues 145–171 (SDEEEDDDSEEDEEDDEDEDEDEDEIE) show a composition bias toward acidic residues. Low complexity predominate over residues 172–183 (PAAMKAAAAAPA). Residues Ser184 and Ser206 each carry the phosphoserine modification. Acidic residues predominate over residues 184–211 (SEDEDDEDDEDDEDDDDDEEDDSEEEAM). Thr214 is modified (phosphothreonine). A compositionally biased stretch (acidic residues) spans 234–272 (EDEDEEEDDEDEDDDDDEDDEDDDDEDDEEEEEEEEEEP). Positions 273–300 (VKEAPGKRKKEMAKQKAAPEAKKQKVEG) are enriched in basic and acidic residues. Lys297 is covalently cross-linked (Glycyl lysine isopeptide (Lys-Gly) (interchain with G-Cter in SUMO1); alternate). Lys297 is covalently cross-linked (Glycyl lysine isopeptide (Lys-Gly) (interchain with G-Cter in SUMO2); alternate). Position 301 is a phosphothreonine (Thr301). RRM domains are found at residues 307-383 (FNLF…KPKG) and 393-466 (RTLL…YTGE). Lys318 is modified (N6-acetyllysine). A Glycyl lysine isopeptide (Lys-Gly) (interchain with G-Cter in SUMO1); alternate cross-link involves residue Lys324. Lys324 is covalently cross-linked (Glycyl lysine isopeptide (Lys-Gly) (interchain with G-Cter in SUMO2); alternate). At Lys348 the chain carries N6-acetyllysine. Ser356 carries the post-translational modification Phosphoserine. A Phosphothreonine modification is found at Thr367. Lys370 is covalently cross-linked (Glycyl lysine isopeptide (Lys-Gly) (interchain with G-Cter in SUMO2)). A Glycyl lysine isopeptide (Lys-Gly) (interchain with G-Cter in SUMO2); alternate cross-link involves residue Lys377. Lys377 bears the N6-acetyllysine; alternate mark. Residues Lys398 and Lys403 each carry the N6-acetyllysine modification. Thr405 bears the Phosphothreonine mark. N6-acetyllysine is present on residues Lys427 and Lys444. A phosphoserine mark is found at Ser458 and Ser460. N6-acetyllysine is present on residues Lys467 and Lys477. One can recognise an RRM 3 domain in the interval 486–560 (KTLVLSNLSY…RAIRLELQGP (75 aa)). Lys513 is covalently cross-linked (Glycyl lysine isopeptide (Lys-Gly) (interchain with G-Cter in SUMO2); alternate). Lys513 is modified (N6-acetyllysine; alternate). At Lys521 the chain carries N6-acetyllysine. A Phosphoserine modification is found at Ser563. An N6-acetyllysine modification is found at Lys572. In terms of domain architecture, RRM 4 spans 572–647 (KTLFVKGLSE…NKVTLDWAKP (76 aa)). A Glycyl lysine isopeptide (Lys-Gly) (interchain with G-Cter in SUMO2); alternate cross-link involves residue Lys577. Residue Lys577 is modified to N6-acetyllysine; alternate. Ser580 carries the post-translational modification Phosphoserine. Lys589 participates in a covalent cross-link: Glycyl lysine isopeptide (Lys-Gly) (interchain with G-Cter in SUMO1); alternate. Lys589 participates in a covalent cross-link: Glycyl lysine isopeptide (Lys-Gly) (interchain with G-Cter in SUMO2); alternate. 2 positions are modified to phosphoserine: Ser591 and Ser619. Residue Lys624 forms a Glycyl lysine isopeptide (Lys-Gly) (interchain with G-Cter in SUMO2) linkage. The disordered stretch occupies residues 640 to 710 (VTLDWAKPKG…KPQGKKTKFE (71 aa)). Lys646 bears the N6-acetyllysine mark. Over residues 650–696 (EGGFGGRGGGRGGFGGRGGGRGGRGGFGGRGRGGFGGRGGFRGGRGG) the composition is skewed to gly residues. Arg656, Arg660, Arg666, Arg670, Arg673, Arg679, Arg681, Arg687, and Arg691 each carry asymmetric dimethylarginine. Position 694 is an asymmetric dimethylarginine; alternate (Arg694). An Omega-N-methylarginine; alternate modification is found at Arg694. Residues 697 to 710 (GGDHKPQGKKTKFE) are compositionally biased toward basic and acidic residues.

Identified in a IGF2BP1-dependent mRNP granule complex containing untranslated mRNAs. Component of the SWAP complex that consists of NPM1, NCL/nucleolin, PARP1 and SWAP70. Component of a complex which is at least composed of HTATSF1/Tat-SF1, the P-TEFb complex components CDK9 and CCNT1, RNA polymerase II, SUPT5H, and NCL/nucleolin. Interacts with AICDA. Interacts with APTX. Interacts with C1QBP. Interacts with ERBB4. Interacts (via C-terminus) with FMR1 isoform 6 (via N-terminus). Interacts with GZF1; this interaction is important for nucleolar localization of GZF1. Interacts with NSUN2. Interacts with NVL. Interacts (via N-terminus domain) with SETX. Interacts (via RRM1 and C-terminal RRM4/Arg/Gly-rich domains) with TERT; the interaction is important for nucleolar localization of TERT. Interacts with WDR46. Interacts with ZFP36. Interacts with LRRC34. Interacts with RRP1B. Interacts with HNRNPU; this interaction occurs during mitosis. Interacts with RIOK1; RIOK1 recruits NCL to PRMT5 for symmetrically methylation. Interacts with ZBTB7B. Interacts with MDK; this interaction promotes NCL clustering and lateral movements of this complex into lipid rafts leading to MDK internalization. Interacts with HDGF (isoform 1). Interacts with ALKBH2. Interacts with IGFBP5; this interaction is necessary for IGFBP5 localization to the nucleus. Interacts with DDX24 (when ubiquitinated); this interaction may be important during ribosome biogenesis. Some glutamate residues are glycylated by TTLL8. This modification occurs exclusively on glutamate residues and results in a glycine chain on the gamma-carboxyl group. In terms of processing, symmetrically methylated by PRMT5.

It localises to the nucleus. Its subcellular location is the nucleolus. It is found in the cytoplasm. Nucleolin is the major nucleolar protein of growing eukaryotic cells. It is found associated with intranucleolar chromatin and pre-ribosomal particles. It induces chromatin decondensation by binding to histone H1. It is thought to play a role in pre-rRNA transcription and ribosome assembly. May play a role in the process of transcriptional elongation. Binds RNA oligonucleotides with 5'-UUAGGG-3' repeats more tightly than the telomeric single-stranded DNA 5'-TTAGGG-3' repeats. The sequence is that of Nucleolin (NCL) from Homo sapiens (Human).